The following is a 722-amino-acid chain: Zinc finger protein 600 (722 aa).

Residues 162-184 form a C2H2-type 1; degenerate zinc finger; the sequence is FQCNESGKAFNCSSLLRKHQIPH. C2H2-type zinc fingers lie at residues 190-212, 218-240, 246-268, 274-296, 302-324, 330-352, 358-380, 386-408, and 414-436; these read YKCDVCGKLFNHKQYLTCHCRCH, YKCNECGKSFSQVSSLTCHRRLH, HKCNECGKIFGQNSALVIHKAIH, YKCNECDKAFNQQSNLARHRRIH, YKCEECDKVFSRKSTLESHKRIH, YKCKVCDTAFTWNSQLARHKRIH, YKCNECGKTFSHKSSLVCHHRLH, YKCKVCDKAFAWNSHLVRHTRIH, and YKCNECGKTFGQNSDLLIHKSIH. A C2H2-type 11; degenerate zinc finger spans residues 442–464; sequence YKYEECEKVFSCGSTLETHKIIH. C2H2-type zinc fingers lie at residues 470 to 492, 498 to 520, 526 to 548, 554 to 576, 582 to 604, 610 to 632, 638 to 660, 666 to 688, and 694 to 716; these read YKCKVCDKAFACHSYLAKHTRIH, YKCNECSKTFRLRSYLASHRRVH, YKCNECSKTFSQRSYLHCHRRLH, YKCNECGKTFSHKPSLVHHRRLH, YKCTVCDKAFVRNSYLARHTRIH, YKCNECGKAFNQQSQLSLHHRIH, YKCETCDKVFSRKSHLKRHRRIH, YKCKVCDKTFGSDSHLKQHTGLH, and YKCNECGKAFSKQSTLIHHQAVH.

The protein belongs to the krueppel C2H2-type zinc-finger protein family.

The protein localises to the nucleus. In terms of biological role, may be involved in transcriptional regulation. The sequence is that of Zinc finger protein 600 (ZNF600) from Homo sapiens (Human).